Consider the following 328-residue polypeptide: Nickel import system permease protein NikB (328 aa).

6 consecutive transmembrane segments (helical) span residues 11 to 31, 104 to 124, 139 to 159, 170 to 190, 229 to 249, and 279 to 299; these read LMQMIVVLFVISTLTFILMKL, LLISFSTLVVSLCISIPLGII, VISTLSISLPAFFIGIILLFI, ILSQFILPVITLSLGMCAYII, ILPIIPLLGISLGSLIGGTVV, and VLFIGFFVVIINTIADLLTLL. The 198-residue stretch at 100–297 folds into the ABC transmembrane type-1 domain; that stretch reads APITLLISFS…IINTIADLLT (198 aa).

The protein belongs to the binding-protein-dependent transport system permease family. OppBC subfamily. As to quaternary structure, the complex is composed of two ATP-binding proteins (NikD and NikE), two transmembrane proteins (NikB and NikC) and a solute-binding protein (NikA).

Its subcellular location is the cell membrane. In terms of biological role, part of the ABC transporter complex NikABCDE (Opp2) involved in nickel import. Probably responsible for the translocation of the substrate across the membrane. The protein is Nickel import system permease protein NikB of Staphylococcus aureus (strain USA300).